A 238-amino-acid polypeptide reads, in one-letter code: Zinc import ATP-binding protein ZnuC (238 aa).

Positions Val-5–Lys-220 constitute an ABC transporter domain. Residue Gly-37–Ser-44 coordinates ATP.

It belongs to the ABC transporter superfamily. Zinc importer (TC 3.A.1.15.5) family. As to quaternary structure, the complex is composed of two ATP-binding proteins (ZnuC), two transmembrane proteins (ZnuB) and a solute-binding protein (ZnuA).

It localises to the cell inner membrane. It catalyses the reaction Zn(2+)(out) + ATP(in) + H2O(in) = Zn(2+)(in) + ADP(in) + phosphate(in) + H(+)(in). In terms of biological role, part of the ABC transporter complex ZnuABC involved in zinc import. Responsible for energy coupling to the transport system. This Buchnera aphidicola subsp. Acyrthosiphon pisum (strain APS) (Acyrthosiphon pisum symbiotic bacterium) protein is Zinc import ATP-binding protein ZnuC.